A 200-amino-acid chain; its full sequence is Adenylate kinase (200 aa).

10–15 (GAGKGT) provides a ligand contact to ATP. The interval 30–59 (STGDMLRAAVAAETPVGLEAKAIMESGGLV) is NMP. Residues threonine 31, arginine 36, 57–59 (GLV), 85–88 (GFPR), and glutamine 92 each bind AMP. Residues 126-142 (KRAEETAARGQPVRKDD) are LID. Arginine 127 is a binding site for ATP. Residues arginine 139 and arginine 150 each coordinate AMP. Lysine 178 serves as a coordination point for ATP.

It belongs to the adenylate kinase family. As to quaternary structure, monomer.

Its subcellular location is the cytoplasm. The catalysed reaction is AMP + ATP = 2 ADP. It participates in purine metabolism; AMP biosynthesis via salvage pathway; AMP from ADP: step 1/1. Its function is as follows. Catalyzes the reversible transfer of the terminal phosphate group between ATP and AMP. Plays an important role in cellular energy homeostasis and in adenine nucleotide metabolism. In Methylorubrum extorquens (strain PA1) (Methylobacterium extorquens), this protein is Adenylate kinase.